The sequence spans 565 residues: Receptor-like serine/threonine-protein kinase NCRK (565 aa).

A signal peptide spans 1–23; sequence MKMRVETALAILLVLISIQQCYG. Topologically, residues 24 to 103 are extracellular; that stretch reads GVSNYTCTCF…SKKQYLSRKL (80 aa). 5 N-linked (GlcNAc...) asparagine glycosylation sites follow: asparagine 27, asparagine 37, asparagine 45, asparagine 77, and asparagine 85. Residues 104 to 124 form a helical membrane-spanning segment; it reads VIVILLFCGVLISLAFLASMI. At 125–565 the chain is on the cytoplasmic side; that stretch reads CYICRKDKFS…PVLLEPSAHI (441 aa). The Protein kinase domain maps to 210-495; the sequence is FSSNSVIGHG…REVVQILSTI (286 aa). ATP is bound by residues 216-224 and lysine 238; that span reads IGHGGSSCV. Aspartate 339 (proton acceptor) is an active-site residue. Phosphothreonine occurs at positions 378 and 383. The residue at position 391 (tyrosine 391) is a Phosphotyrosine.

It belongs to the protein kinase superfamily. Ser/Thr protein kinase family. In terms of assembly, interacts with ARAC5. Post-translationally, phosphorylated. As to expression, mostly expressed in leaf primordia, root and shoot apical meristems, lateral root primordia, and stele of older roots and hypocotyls. In leaves and cotyledons, highest levels observed in trichomes, vasculatures, and hydathode endothem.

Its subcellular location is the cell membrane. The protein resides in the prevacuolar compartment membrane. It localises to the endosome. The catalysed reaction is L-seryl-[protein] + ATP = O-phospho-L-seryl-[protein] + ADP + H(+). It catalyses the reaction L-threonyl-[protein] + ATP = O-phospho-L-threonyl-[protein] + ADP + H(+). The polypeptide is Receptor-like serine/threonine-protein kinase NCRK (NCRK) (Arabidopsis thaliana (Mouse-ear cress)).